Reading from the N-terminus, the 262-residue chain is Apolipoprotein A-I-1 (262 aa).

The first 18 residues, 1 to 18 (MKFLALALTILLAAGTQA), serve as a signal peptide directing secretion. The segment at 32-63 (VKAALSMYIAQVKLTAQRSIDLLDDTEYKEYK) is 3 X approximate tandem repeats. Repeat copies occupy residues 64–85 (MQLT…QSLA) and 87–107 (YSEA…AEVM). A 10 X approximate tandem repeats region spans residues 64 to 262 (MQLTQSLDNL…YETISQAMKA (199 aa)). The 3; half-length repeat unit spans residues 108-118 (KDVEELRSQLE). 5 tandem repeats follow at residues 119–140 (PKRA…KKLE), 141–162 (PLIK…AKME), 163–184 (PIVE…TKLM), 185–206 (PIVE…TLAA), and 207–228 (PYAE…EKVS). Residues 229–239 (PLSEDFKGQVG) form a 9; half-length repeat. Residues 240–262 (PAAEQAKQKLLAFYETISQAMKA) form repeat 10.

The protein belongs to the apolipoprotein A1/A4/E family.

It is found in the secreted. Participates in the reverse transport of cholesterol from tissues to the liver for excretion by promoting cholesterol efflux from tissues and by acting as a cofactor for the lecithin cholesterol acyltransferase (LCAT). In Oncorhynchus mykiss (Rainbow trout), this protein is Apolipoprotein A-I-1.